Consider the following 1866-residue polypeptide: Rho GTPase-activating protein 100F (1866 aa).

Disordered stretches follow at residues 22–98 (MLCC…AGVK), 262–336 (RRGN…NNYS), and 466–530 (LRSS…DTEA). The span at 59–77 (GNQQHHGNQQHHGNQQQHH) shows a compositional bias: low complexity. In terms of domain architecture, PDZ spans 179-264 (LVEIVKRPGQ…LVLAIRQRRG (86 aa)). Pro residues predominate over residues 271–286 (PGPPTLSRPEQKPPPV). The segment covering 301–326 (TDRMPRPRSSRDRRTGDGREMTESRS) has biased composition (basic and acidic residues). Phosphoserine is present on S719. Residues 745–775 (AGPASPSGSILSTGGHQSPAPTPSATLPRPH) form a disordered region. Residues 750–760 (PSGSILSTGGH) show a composition bias toward polar residues. The C2 domain occupies 789-908 (KLDKPIVDIG…LRQSPLHQLA (120 aa)). The Rho-GAP domain maps to 948–1148 (ADLETVVNRE…YLLQIWPQPQ (201 aa)). 6 disordered regions span residues 1273–1328 (GGSV…QVKI), 1356–1380 (PTTQ…RRGN), 1393–1479 (SVVN…DLVS), 1514–1607 (FTPI…MVST), 1644–1727 (YTND…YGTL), and 1819–1840 (DEKP…ADKG). Pro residues predominate over residues 1282 to 1292 (DPSPLPLPGTP). A compositionally biased stretch (low complexity) spans 1293 to 1302 (SPGSSSASTG). Composition is skewed to polar residues over residues 1356-1377 (PTTQ…TASR), 1393-1408 (SVVN…YTGS), and 1416-1429 (GNSS…NASG). Positions 1443–1479 (SSATSSSSSSQATVLSAGSTATSAPTTSSDDSDDLVS) are enriched in low complexity. The segment covering 1538–1587 (QLVTPISGSSSKPGATTGAISKYTTGSVESSINANSQKLSSPSRLCNSKD) has biased composition (polar residues). 2 stretches are compositionally biased toward low complexity: residues 1590–1607 (SRTG…MVST) and 1644–1658 (YTND…SSKS). Residues 1659–1670 (GIGGGSGTGLGA) are compositionally biased toward gly residues. Composition is skewed to low complexity over residues 1671–1688 (VSGA…LFGS) and 1696–1720 (GSSH…NHNT). Residues 1830-1839 (HGEEKLGADK) show a composition bias toward basic and acidic residues.

Interacts (via PDZ domain) with Nrx-1; may recruit Nrx-1 to the presynaptic active zone.

The protein resides in the presynapse. In terms of biological role, GTPase activator for the Rho-type GTPases by converting them to an inactive GDP-bound state. Promotes the anchoring of Liprin-alpha clusters at synapses. Recruits and keeps Nrx-1 levels high in active zones in the presynapse opposite the postsynaptic region. This Drosophila melanogaster (Fruit fly) protein is Rho GTPase-activating protein 100F (RhoGAP100F).